A 110-amino-acid polypeptide reads, in one-letter code: Large ribosomal subunit protein uL22 (110 aa).

Belongs to the universal ribosomal protein uL22 family. Part of the 50S ribosomal subunit.

In terms of biological role, this protein binds specifically to 23S rRNA; its binding is stimulated by other ribosomal proteins, e.g. L4, L17, and L20. It is important during the early stages of 50S assembly. It makes multiple contacts with different domains of the 23S rRNA in the assembled 50S subunit and ribosome. Its function is as follows. The globular domain of the protein is located near the polypeptide exit tunnel on the outside of the subunit, while an extended beta-hairpin is found that lines the wall of the exit tunnel in the center of the 70S ribosome. This Cellvibrio japonicus (strain Ueda107) (Pseudomonas fluorescens subsp. cellulosa) protein is Large ribosomal subunit protein uL22.